A 260-amino-acid chain; its full sequence is Thiazole synthase (260 aa).

Catalysis depends on lysine 102, which acts as the Schiff-base intermediate with DXP. 1-deoxy-D-xylulose 5-phosphate-binding positions include glycine 163, 189–190 (AG), and 211–212 (NT).

Belongs to the ThiG family. As to quaternary structure, homotetramer. Forms heterodimers with either ThiH or ThiS.

It is found in the cytoplasm. It carries out the reaction [ThiS sulfur-carrier protein]-C-terminal-Gly-aminoethanethioate + 2-iminoacetate + 1-deoxy-D-xylulose 5-phosphate = [ThiS sulfur-carrier protein]-C-terminal Gly-Gly + 2-[(2R,5Z)-2-carboxy-4-methylthiazol-5(2H)-ylidene]ethyl phosphate + 2 H2O + H(+). The protein operates within cofactor biosynthesis; thiamine diphosphate biosynthesis. Catalyzes the rearrangement of 1-deoxy-D-xylulose 5-phosphate (DXP) to produce the thiazole phosphate moiety of thiamine. Sulfur is provided by the thiocarboxylate moiety of the carrier protein ThiS. In vitro, sulfur can be provided by H(2)S. In Geobacter metallireducens (strain ATCC 53774 / DSM 7210 / GS-15), this protein is Thiazole synthase.